The following is a 325-amino-acid chain: Peroxidase 68 (325 aa).

Residues 1–28 (MECYEQSRQRAAFVVLLFIVMLGSQAQA) form the signal peptide. A Pyrrolidone carboxylic acid modification is found at Gln-29. 4 disulfide bridges follow: Cys-39/Cys-119, Cys-72/Cys-77, Cys-125/Cys-321, and Cys-205/Cys-230. The active-site Proton acceptor is His-70. Positions 71, 74, 76, 78, and 80 each coordinate Ca(2+). Asn-99 carries N-linked (GlcNAc...) asparagine glycosylation. Position 168 (Pro-168) interacts with substrate. His-198 is a binding site for heme b. Thr-199 is a Ca(2+) binding site. A glycan (N-linked (GlcNAc...) asparagine) is linked at Asn-214. 3 residues coordinate Ca(2+): Asp-245, Thr-248, and Asp-253.

The protein belongs to the peroxidase family. Classical plant (class III) peroxidase subfamily. It depends on heme b as a cofactor. The cofactor is Ca(2+).

It localises to the secreted. The enzyme catalyses 2 a phenolic donor + H2O2 = 2 a phenolic radical donor + 2 H2O. In terms of biological role, removal of H(2)O(2), oxidation of toxic reductants, biosynthesis and degradation of lignin, suberization, auxin catabolism, response to environmental stresses such as wounding, pathogen attack and oxidative stress. These functions might be dependent on each isozyme/isoform in each plant tissue. This chain is Peroxidase 68 (PER68), found in Arabidopsis thaliana (Mouse-ear cress).